The following is a 518-amino-acid chain: Probable cytosol aminopeptidase (518 aa).

Residues K270 and D275 each contribute to the Mn(2+) site. The active site involves K282. Mn(2+) is bound by residues D293, D352, and E354. R356 is an active-site residue. Over residues 495–507 the composition is skewed to polar residues; that stretch reads SRTTRQPGSTGET. Residues 495–518 form a disordered region; the sequence is SRTTRQPGSTGETGSRKNRRKSKE.

Belongs to the peptidase M17 family. Mn(2+) serves as cofactor.

It is found in the cytoplasm. The enzyme catalyses Release of an N-terminal amino acid, Xaa-|-Yaa-, in which Xaa is preferably Leu, but may be other amino acids including Pro although not Arg or Lys, and Yaa may be Pro. Amino acid amides and methyl esters are also readily hydrolyzed, but rates on arylamides are exceedingly low.. The catalysed reaction is Release of an N-terminal amino acid, preferentially leucine, but not glutamic or aspartic acids.. Presumably involved in the processing and regular turnover of intracellular proteins. Catalyzes the removal of unsubstituted N-terminal amino acids from various peptides. This is Probable cytosol aminopeptidase from Nitrosospira multiformis (strain ATCC 25196 / NCIMB 11849 / C 71).